We begin with the raw amino-acid sequence, 313 residues long: D-alanine--D-alanine ligase (313 aa).

Positions 108 to 308 (KLVWQQLGIP…YQELVVGVLA (201 aa)) constitute an ATP-grasp domain. Residue 138 to 193 (VAKLGLPLFVKPASEGSSVAVIKVKSADALPAALIEAVKYDKIVVVEKSVEGGGEY) participates in ATP binding. Mg(2+) contacts are provided by Asp-262, Glu-275, and Asn-277.

This sequence belongs to the D-alanine--D-alanine ligase family. Mg(2+) serves as cofactor. Requires Mn(2+) as cofactor.

The protein resides in the cytoplasm. The enzyme catalyses 2 D-alanine + ATP = D-alanyl-D-alanine + ADP + phosphate + H(+). It participates in cell wall biogenesis; peptidoglycan biosynthesis. Functionally, cell wall formation. In Paraburkholderia phytofirmans (strain DSM 17436 / LMG 22146 / PsJN) (Burkholderia phytofirmans), this protein is D-alanine--D-alanine ligase.